Reading from the N-terminus, the 272-residue chain is Endogenous Bornavirus-like nucleoprotein 2 (272 aa).

The tract at residues 48–70 (MSHLRKDSQPSSPGDDAMDRSGL) is disordered.

May act as an RNA-binding protein. The C-terminal region is highly homologous to the bornavirus nucleocapsid N protein that binds viral RNA and oligomerizes. The viral protein also possesses a nuclear import and a nuclear export signal. These 2 signals seem absent in EBLN-2 supporting an unrelated function in Human. This Homo sapiens (Human) protein is Endogenous Bornavirus-like nucleoprotein 2 (EBLN2).